Consider the following 152-residue polypeptide: Aminoglycoside N(6')-acetyltransferase type 1 (152 aa).

The 148-residue stretch at 5 to 152 (PLVRPVETTD…AQVRCFRKPL (148 aa)) folds into the N-acetyltransferase domain. Residues Trp-26, Tyr-73, Glu-86, and Asp-122 each coordinate substrate. Acetyl-CoA is bound at residue Asn-127.

As to quaternary structure, homodimer.

It catalyses the reaction kanamycin B + acetyl-CoA = N(6')-acetylkanamycin B + CoA + H(+). Catalyzes the transfer of an acetyl group from acetyl-CoA to the 6'-amino group of aminoglycoside molecules conferring resistance to antibiotics containing the purpurosamine ring including amikacin. The polypeptide is Aminoglycoside N(6')-acetyltransferase type 1 (aacA7) (Klebsiella aerogenes (Enterobacter aerogenes)).